The following is a 168-amino-acid chain: Protein-export protein SecB (168 aa).

The protein belongs to the SecB family. Homotetramer, a dimer of dimers. One homotetramer interacts with 1 SecA dimer.

It localises to the cytoplasm. One of the proteins required for the normal export of preproteins out of the cell cytoplasm. It is a molecular chaperone that binds to a subset of precursor proteins, maintaining them in a translocation-competent state. It also specifically binds to its receptor SecA. The sequence is that of Protein-export protein SecB from Sinorhizobium medicae (strain WSM419) (Ensifer medicae).